A 67-amino-acid polypeptide reads, in one-letter code: UPF0519 protein C (67 aa).

The tract at residues 18–37 (KSQANLNSNSTNSPNNVQGL) is disordered. Low complexity predominate over residues 22-33 (NLNSNSTNSPNN).

The protein belongs to the UPF0519 family.

The polypeptide is UPF0519 protein C (Dictyostelium discoideum (Social amoeba)).